Reading from the N-terminus, the 193-residue chain is Potassium-transporting ATPase KdpC subunit (193 aa).

The helical transmembrane segment at 10–30 threads the bilayer; sequence AAIIIFSVLTGVIYPALVTVI.

The protein belongs to the KdpC family. In terms of assembly, the system is composed of three essential subunits: KdpA, KdpB and KdpC.

It localises to the cell membrane. Its function is as follows. Part of the high-affinity ATP-driven potassium transport (or Kdp) system, which catalyzes the hydrolysis of ATP coupled with the electrogenic transport of potassium into the cytoplasm. This subunit acts as a catalytic chaperone that increases the ATP-binding affinity of the ATP-hydrolyzing subunit KdpB by the formation of a transient KdpB/KdpC/ATP ternary complex. The chain is Potassium-transporting ATPase KdpC subunit from Herpetosiphon aurantiacus (strain ATCC 23779 / DSM 785 / 114-95).